A 292-amino-acid chain; its full sequence is Mycothiol acetyltransferase (292 aa).

N-acetyltransferase domains lie at 13-168 (ALDR…KWLQ) and 159-292 (KSVA…VYEK). Residue E40 participates in 1D-myo-inositol 2-(L-cysteinylamino)-2-deoxy-alpha-D-glucopyranoside binding. Residue 77–79 (LAV) participates in acetyl-CoA binding. Positions 179, 218, and 226 each coordinate 1D-myo-inositol 2-(L-cysteinylamino)-2-deoxy-alpha-D-glucopyranoside. Residues 230 to 232 (VGL) and 237 to 243 (RGRGLGD) each bind acetyl-CoA. Y264 contributes to the 1D-myo-inositol 2-(L-cysteinylamino)-2-deoxy-alpha-D-glucopyranoside binding site.

It belongs to the acetyltransferase family. MshD subfamily. Monomer.

The enzyme catalyses 1D-myo-inositol 2-(L-cysteinylamino)-2-deoxy-alpha-D-glucopyranoside + acetyl-CoA = mycothiol + CoA + H(+). Functionally, catalyzes the transfer of acetyl from acetyl-CoA to desacetylmycothiol (Cys-GlcN-Ins) to form mycothiol. The chain is Mycothiol acetyltransferase from Corynebacterium glutamicum (strain R).